Reading from the N-terminus, the 345-residue chain is Heat stress transcription factor A-4c (345 aa).

Residues 11–105 (LPPFLTKTYE…LMKNIHRRKP (95 aa)) mediate DNA binding. The interval 119-185 (PLTESERRSM…SIVAYVSQVL (67 aa)) is hydrophobic repeat HR-A/B. The Nuclear localization signal signature appears at 199–203 (RRKRR). The AHA1 signature appears at 226-235 (LTFWENLVSE). The segment at 240–329 (SGLQSSSMDH…NGNKIGNQRT (90 aa)) is disordered. The segment covering 274 to 283 (PPVTVTAPAP) has biased composition (low complexity). The AHA2 motif lies at 289–298 (DDFWEQCLTE). Polar residues-rich tracts occupy residues 296–308 (LTEN…QQEV) and 317–329 (NDNN…NQRT).

Belongs to the HSF family. Class A subfamily. Homotrimer. Exhibits temperature-dependent phosphorylation. Expressed in roots, seedlings and at lower levels in leaves.

The protein resides in the nucleus. In terms of biological role, transcriptional activator that specifically binds DNA sequence 5'-AGAAnnTTCT-3' known as heat shock promoter elements (HSE). May be involved in general response to auxin. The polypeptide is Heat stress transcription factor A-4c (HSFA4C) (Arabidopsis thaliana (Mouse-ear cress)).